A 593-amino-acid chain; its full sequence is Aspartate--tRNA ligase (593 aa).

An L-aspartate-binding site is contributed by E180. An aspartate region spans residues 204-207; the sequence is QIFK. R226 is a binding site for L-aspartate. ATP-binding positions include 226–228 and Q235; that span reads RDE. H453 contributes to the L-aspartate binding site. E487 contributes to the ATP binding site. R494 is an L-aspartate binding site. 539 to 542 contacts ATP; the sequence is GLDR.

This sequence belongs to the class-II aminoacyl-tRNA synthetase family. Type 1 subfamily. Homodimer.

It is found in the cytoplasm. It catalyses the reaction tRNA(Asp) + L-aspartate + ATP = L-aspartyl-tRNA(Asp) + AMP + diphosphate. Its function is as follows. Catalyzes the attachment of L-aspartate to tRNA(Asp) in a two-step reaction: L-aspartate is first activated by ATP to form Asp-AMP and then transferred to the acceptor end of tRNA(Asp). This is Aspartate--tRNA ligase from Clostridium botulinum (strain Okra / Type B1).